The primary structure comprises 471 residues: Casein kinase 1-like protein 9 (471 aa).

In terms of domain architecture, Protein kinase spans 9–278 (FKLGRKIGSG…LKRLFRDLFI (270 aa)). ATP contacts are provided by residues 15-23 (IGSGSFGEL) and K38. The Proton acceptor role is filled by D128. Residues 300 to 471 (SSSGSSSRTR…RSLELLTLRK (172 aa)) are disordered. The span at 325–339 (EKQERIAGKETRENR) shows a compositional bias: basic and acidic residues. The span at 385 to 430 (SSRYGSSSRRAIPSSSRPSSAGGPSDSRSSSRLVTSTGGVGTVSNR) shows a compositional bias: low complexity. The segment covering 431-449 (ASTSQRIQAGNESRTSSFS) has biased composition (polar residues). Positions 454–464 (NTREDPLRRSL) are enriched in basic and acidic residues.

This sequence belongs to the protein kinase superfamily. CK1 Ser/Thr protein kinase family. Casein kinase I subfamily. In terms of assembly, monomer. Post-translationally, autophosphorylated on serine, threonine and tyrosine residues. As to expression, expressed in leaves, stems and flowers.

It localises to the cytoplasm. Its subcellular location is the nucleus. The catalysed reaction is L-seryl-[protein] + ATP = O-phospho-L-seryl-[protein] + ADP + H(+). The enzyme catalyses L-threonyl-[protein] + ATP = O-phospho-L-threonyl-[protein] + ADP + H(+). Its function is as follows. Casein kinases are operationally defined by their preferential utilization of acidic proteins such as caseins as substrates. Can phosphorylate casein on serine and threonine residues, and poly(Glu,Tyr) in vitro. The protein is Casein kinase 1-like protein 9 of Arabidopsis thaliana (Mouse-ear cress).